The sequence spans 906 residues: Pre-mRNA-splicing factor prp1 (906 aa).

Disordered regions lie at residues 50-129 (IEQR…VSSQ) and 142-164 (DEDW…KQPR). The segment covering 108-124 (REKQEQLQKEKYEKENP) has biased composition (basic and acidic residues). Position 235 is a phosphoserine (serine 235). HAT repeat units follow at residues 258–290 (GDIR…LEEV), 322–353 (HPAA…KLEN), 354–384 (QAQH…NLEE), 385–416 (EVDN…LETY), 524–556 (KCID…LEKL), 558–590 (GTTE…ERKN), 592–624 (NDIA…IEFV), 693–725 (EQIE…LEEK), 726–758 (QSVI…MELR), 760–792 (GNIS…LEPR), and 824–856 (KKAD…YSLE).

As to quaternary structure, interacts with brr2 and spp42.

It is found in the nucleus. Functionally, involved in pre-mRNA splicing. Interacts with prp6 and prp13. May also be involved in the regulation of the G0-G1/G2 transition. Required for pre-spliceosome formation, which is the first step of pre-mRNA splicing. This protein is associated with snRNP U5. Has a role in branch site-3' splice site selection. Associates with the branch site-3' splice 3'-exon region. The sequence is that of Pre-mRNA-splicing factor prp1 (prp1) from Schizosaccharomyces pombe (strain 972 / ATCC 24843) (Fission yeast).